The chain runs to 122 residues: Large ribosomal subunit protein eL18 (122 aa).

Belongs to the eukaryotic ribosomal protein eL18 family.

In Picrophilus torridus (strain ATCC 700027 / DSM 9790 / JCM 10055 / NBRC 100828 / KAW 2/3), this protein is Large ribosomal subunit protein eL18.